The chain runs to 2524 residues: Highly reducing polyketide synthase Preu5 (2524 aa).

Positions 5–426 (DTPIAIIGLS…GSNSAIVIEK (422 aa)) constitute a Ketosynthase family 3 (KS3) domain. Residues cysteine 175, histidine 310, and histidine 350 each act as for beta-ketoacyl synthase activity in the active site. Positions 431 to 470 (DELGHETNGTNGVSVSNGVNGSNGFTNGSNGTNGHAENGN) are disordered. The segment covering 437-464 (TNGTNGVSVSNGVNGSNGFTNGSNGTNG) has biased composition (low complexity). Residues 559–882 (VFTGQGAQYA…TYLPSLVRNV (324 aa)) are malonyl-CoA:ACP transacylase (MAT) domain. The active-site For malonyltransferase activity is the serine 648. The N-terminal hotdog fold stretch occupies residues 950-1084 (HELLGRRVVS…GQIEPEFADM (135 aa)). A PKS/mFAS DH domain is found at 950-1264 (HELLGRRVVS…FRNIGSADEN (315 aa)). Residues 950–1266 (HELLGRRVVS…NIGSADENID (317 aa)) form a dehydratase (DH) domain region. The Proton acceptor; for dehydratase activity role is filled by histidine 982. The C-terminal hotdog fold stretch occupies residues 1102-1264 (ADLLEHDIEG…FRNIGSADEN (163 aa)). The Proton donor; for dehydratase activity role is filled by aspartate 1171. Residues 1418–1611 (SQAVGDLADN…IPGVWDSEVQ (194 aa)) form a methyltransferase (CMet) domain region. Residues 1825-2139 (GSPDSIYFRR…SGDHLGKIVV (315 aa)) are enoylreductase (ER) domain. Residues 2164 to 2339 (GTYLVTGGTR…HTVSIALPIV (176 aa)) form a ketoreductase (KR) domain region. The 78-residue stretch at 2445 to 2522 (DPLEGLTEAL…ALATDILSQR (78 aa)) folds into the Carrier domain. Position 2482 is an O-(pantetheine 4'-phosphoryl)serine (serine 2482).

The cofactor is pantetheine 4'-phosphate.

Its function is as follows. Highly reducing polyketide synthase; part of a gene cluster that mediates the biosynthesis of a yet unidentified natural product. In Preussia isomera (Coprophilous fungus), this protein is Highly reducing polyketide synthase Preu5.